A 265-amino-acid chain; its full sequence is NAD kinase (265 aa).

Asp-45 (proton acceptor) is an active-site residue. NAD(+)-binding positions include 45 to 46 (DG), 122 to 123 (NE), Arg-148, Asp-150, 161 to 166 (TAYNKS), Ala-185, and Gln-223.

Belongs to the NAD kinase family. A divalent metal cation is required as a cofactor.

Its subcellular location is the cytoplasm. The catalysed reaction is NAD(+) + ATP = ADP + NADP(+) + H(+). Involved in the regulation of the intracellular balance of NAD and NADP, and is a key enzyme in the biosynthesis of NADP. Catalyzes specifically the phosphorylation on 2'-hydroxyl of the adenosine moiety of NAD to yield NADP. In Enterococcus faecalis (strain ATCC 700802 / V583), this protein is NAD kinase.